Consider the following 145-residue polypeptide: Transcription antitermination protein NusB (145 aa).

This sequence belongs to the NusB family.

In terms of biological role, involved in transcription antitermination. Required for transcription of ribosomal RNA (rRNA) genes. Binds specifically to the boxA antiterminator sequence of the ribosomal RNA (rrn) operons. This chain is Transcription antitermination protein NusB, found in Burkholderia mallei (strain NCTC 10247).